The primary structure comprises 427 residues: Trigger factor (427 aa).

A PPIase FKBP-type domain is found at 163 to 248; that stretch reads GDTVILDFEG…LHEIKTKEVP (86 aa).

Belongs to the FKBP-type PPIase family. Tig subfamily.

The protein resides in the cytoplasm. It catalyses the reaction [protein]-peptidylproline (omega=180) = [protein]-peptidylproline (omega=0). Functionally, involved in protein export. Acts as a chaperone by maintaining the newly synthesized protein in an open conformation. Functions as a peptidyl-prolyl cis-trans isomerase. The sequence is that of Trigger factor from Listeria innocua serovar 6a (strain ATCC BAA-680 / CLIP 11262).